We begin with the raw amino-acid sequence, 352 residues long: MYKGLLKQYASYLPVNEKTPDVSLMEGNTPLIPLLNISKQLGVQLYGKYEGANPTGSFKDRGMVMAVAKAKEEGSEAIICASTGNTSASAAAYAARLGMKCIIVIPEGKIAHGKLAQAVAYGAEIISIEGNFDDALKAVRNIAAEEPITLVNSVNPYRIEGQKTAAFEICDQLQNAPDVLAIPVGNAGNITAYWKGFCEYEKEKGYKKPRIHGFEAEGAAAIVKGHVIEEPETIATAIRIGNPASWSYAVEAAEQSHGEIDMVSDEEILHAYRLLAKTEGVFAEPGSNASLAGVIKHVESGKIKKGETVVAVLTGNGLKDPDIAISSNQLDIASVSNDIEQIKDHIKGVIMS.

An N6-(pyridoxal phosphate)lysine modification is found at Lys59. Pyridoxal 5'-phosphate is bound by residues Asn85, 185-189 (GNAGN), and Thr314.

It belongs to the threonine synthase family. Requires pyridoxal 5'-phosphate as cofactor.

It catalyses the reaction O-phospho-L-homoserine + H2O = L-threonine + phosphate. It participates in amino-acid biosynthesis; L-threonine biosynthesis; L-threonine from L-aspartate: step 5/5. In terms of biological role, catalyzes the gamma-elimination of phosphate from L-phosphohomoserine and the beta-addition of water to produce L-threonine. The polypeptide is Threonine synthase (thrC) (Bacillus sp. (strain ULM1)).